The sequence spans 263 residues: Caveolae-associated protein 3 (263 aa).

The tract at residues 1–84 (MGESALEPGP…SNTLAQLLAK (84 aa)) is interaction with CAVIN1. The segment at 20–78 (VHAVTVVTLLEKLATMLEALRERQGGLAERQGGLAGSVRRIQSGLGALSRSHDTTSNTL) is leucine-zipper. Phosphoserine occurs at positions 62 and 70. Lysine 128 participates in a covalent cross-link: Glycyl lysine isopeptide (Lys-Gly) (interchain with G-Cter in SUMO2). Residues 135 to 203 (ARAFQKAPEL…SSRKGSEAAQ (69 aa)) form an interaction with CAV1 region. Residues 141-263 (APELLGPEDQ…RPVLQIESAA (123 aa)) form a disordered region. The segment covering 157–170 (QPEDEVGESSDEEP) has biased composition (acidic residues). Phosphoserine occurs at positions 165, 166, 173, and 199. A compositionally biased stretch (low complexity) spans 219-234 (EGPAEGQPAAQPAMEP).

The protein belongs to the CAVIN family. Component of the CAVIN complex composed of CAVIN1, CAVIN2, CAVIN3 and CAVIN4. Interacts with PRKCD and with phosphatidylserine. Phosphatidylserine may form a bridge between PKC and PKC-binding partners and stabilize the binding. Interacts with PER2. Interacts with CAVIN1 and EPS15L1. Interacts (via leucine-zipper domain) with CAV1 in a cholesterol-sensitive manner. Post-translationally, in vitro, phosphorylated by PRKCD.

It localises to the cytoplasm. Its subcellular location is the membrane. The protein resides in the caveola. It is found in the cytosol. Functionally, regulates the traffic and/or budding of caveolae. Plays a role in caveola formation in a tissue-specific manner. Required for the formation of caveolae in smooth muscle but not in the lung and heart endothelial cells. Regulates the equilibrium between cell surface-associated and cell surface-dissociated caveolae by promoting the rapid release of caveolae from the cell surface. Plays a role in the regulation of the circadian clock. Modulates the period length and phase of circadian gene expression and also regulates expression and interaction of the core clock components PER1/2 and CRY1/2. Seems to have an immune potentiation function, especially in the glioma. The sequence is that of Caveolae-associated protein 3 from Rattus norvegicus (Rat).